The primary structure comprises 582 residues: GPI-anchor transamidase component PIGT (582 aa).

An N-terminal signal peptide occupies residues 1–25 (MAAAMPLGLPLRLLVLLLVGRGCCG). The Lumenal portion of the chain corresponds to 26–529 (CAEGPRDSLR…NLPTPDFSMP (504 aa)). The N-linked (GlcNAc...) asparagine glycan is linked to asparagine 168. 2 disulfides stabilise this stretch: cysteine 199–cysteine 276 and cysteine 230–cysteine 235. Asparagine 295 and asparagine 331 each carry an N-linked (GlcNAc...) asparagine glycan. A 2-acyl-6-[6-phosphoethanolamine-alpha-D-mannosyl-(1-&gt;2)-6-phosphoethanolamine-alpha-D-mannosyl-(1-&gt;6)-2-phosphoethanolamine-alpha-D-mannosyl-(1-&gt;4)-alpha-D-glucosaminyl]-1-(1-radyl,2-acyl-sn-glycero-3-phospho)-1D-myo-inositol-binding residues include asparagine 465, aspartate 525, serine 527, and asparagine 531. A helical membrane pass occupies residues 530 to 552 (YNVICLTCTVVAVCYGSFYNLLT). Residues 553-582 (RTFHIEEPKSGGLAKRLANLIRRARGVPPL) lie on the Cytoplasmic side of the membrane.

Belongs to the PIGT family. In terms of assembly, heteropentamer. Part of the GPI-anchor transamidase complex, consisting of PIGK, PIGT, PIGS, PIGU and GAA1. Post-translationally, the disulfide bond between PIGK/GPI8 and PIGT is important for normal enzyme activity.

Its subcellular location is the endoplasmic reticulum membrane. It functions in the pathway glycolipid biosynthesis; glycosylphosphatidylinositol-anchor biosynthesis. Its function is as follows. Component of the glycosylphosphatidylinositol-anchor (GPI-anchor) transamidase (GPI-T) complex that catalyzes the formation of the linkage between a proprotein and a GPI-anchor and participates in GPI anchored protein biosynthesis. May play a crucial role in GPI-T complex assembly in the luminal layer. Binds GPI-anchor. The sequence is that of GPI-anchor transamidase component PIGT from Mus musculus (Mouse).